Here is a 1128-residue protein sequence, read N- to C-terminus: Probable serine/threonine-protein kinase DDB_G0283337 (1128 aa).

Residues 1–17 (MENNNNNNINKTNTPNN) are compositionally biased toward low complexity. Disordered regions lie at residues 1 to 21 (MENN…SFSP), 60 to 100 (INHN…NNNN), 131 to 151 (RESN…NNSN), 236 to 256 (NNSK…SNSN), and 375 to 504 (NDNE…NSEQ). Composition is skewed to low complexity over residues 243–256 (NSSN…SNSN) and 375–502 (NDNE…NNNS). Positions 777–1054 (LSDFSIIGEG…EIQKCKEEYE (278 aa)) constitute a Protein kinase domain. ATP-binding positions include 783–791 (IGEGGFSTV) and Lys809. Catalysis depends on Asp904, which acts as the Proton acceptor.

Belongs to the protein kinase superfamily. Ser/Thr protein kinase family.

It carries out the reaction L-seryl-[protein] + ATP = O-phospho-L-seryl-[protein] + ADP + H(+). It catalyses the reaction L-threonyl-[protein] + ATP = O-phospho-L-threonyl-[protein] + ADP + H(+). The polypeptide is Probable serine/threonine-protein kinase DDB_G0283337 (Dictyostelium discoideum (Social amoeba)).